Here is a 427-residue protein sequence, read N- to C-terminus: Glutamate-1-semialdehyde 2,1-aminomutase (427 aa).

K265 is modified (N6-(pyridoxal phosphate)lysine).

This sequence belongs to the class-III pyridoxal-phosphate-dependent aminotransferase family. HemL subfamily. As to quaternary structure, homodimer. It depends on pyridoxal 5'-phosphate as a cofactor.

Its subcellular location is the cytoplasm. The enzyme catalyses (S)-4-amino-5-oxopentanoate = 5-aminolevulinate. Its pathway is porphyrin-containing compound metabolism; protoporphyrin-IX biosynthesis; 5-aminolevulinate from L-glutamyl-tRNA(Glu): step 2/2. In Photorhabdus laumondii subsp. laumondii (strain DSM 15139 / CIP 105565 / TT01) (Photorhabdus luminescens subsp. laumondii), this protein is Glutamate-1-semialdehyde 2,1-aminomutase.